Reading from the N-terminus, the 103-residue chain is Large ribosomal subunit protein bL21 (103 aa).

It belongs to the bacterial ribosomal protein bL21 family. Part of the 50S ribosomal subunit. Contacts protein L20.

Functionally, this protein binds to 23S rRNA in the presence of protein L20. In Shewanella frigidimarina (strain NCIMB 400), this protein is Large ribosomal subunit protein bL21.